The chain runs to 390 residues: Branched-chain-amino-acid aminotransferase (390 aa).

At Lys-225 the chain carries N6-(pyridoxal phosphate)lysine.

It belongs to the class-IV pyridoxal-phosphate-dependent aminotransferase family. Homodimer. The cofactor is pyridoxal 5'-phosphate.

It catalyses the reaction L-leucine + 2-oxoglutarate = 4-methyl-2-oxopentanoate + L-glutamate. It carries out the reaction L-isoleucine + 2-oxoglutarate = (S)-3-methyl-2-oxopentanoate + L-glutamate. The enzyme catalyses L-valine + 2-oxoglutarate = 3-methyl-2-oxobutanoate + L-glutamate. Functionally, catalyzes the first reaction in the catabolism of the essential branched chain amino acids leucine, isoleucine, and valine. The protein is Branched-chain-amino-acid aminotransferase of Monosiga brevicollis (Choanoflagellate).